Consider the following 147-residue polypeptide: Large ribosomal subunit protein uL15 (147 aa).

Positions 1–57 (MDLSNLSPAPGSTKARKRLGRGPGSGNGTTAGRGNKGHNSRSGGGVRPGFEGGQMPL) are disordered. Composition is skewed to gly residues over residues 21 to 31 (RGPGSGNGTTA) and 42 to 52 (SGGGVRPGFEG).

It belongs to the universal ribosomal protein uL15 family. As to quaternary structure, part of the 50S ribosomal subunit.

In terms of biological role, binds to the 23S rRNA. The polypeptide is Large ribosomal subunit protein uL15 (Desulfosudis oleivorans (strain DSM 6200 / JCM 39069 / Hxd3) (Desulfococcus oleovorans)).